The following is a 119-amino-acid chain: Large ribosomal subunit protein bL20c (119 aa).

It belongs to the bacterial ribosomal protein bL20 family.

It localises to the plastid. It is found in the chloroplast. Binds directly to 23S ribosomal RNA and is necessary for the in vitro assembly process of the 50S ribosomal subunit. It is not involved in the protein synthesizing functions of that subunit. This chain is Large ribosomal subunit protein bL20c, found in Brachypodium distachyon (Purple false brome).